Consider the following 158-residue polypeptide: MHEGVQVSSKLEQLQALLAPVVEGLGYQCWGIEYVSQGKHSVLRIYIDKEGGILVDDCEAVSRQASAILDVEDPISSEYTLEVSSPGMDRPLFTLEQFASHAGEQVKIKLRSPFEGRRNFQGLLRGVEEQDVVVQVDNQEFLLPIDSIDKANIIPSFD.

The protein belongs to the RimP family.

Its subcellular location is the cytoplasm. Functionally, required for maturation of 30S ribosomal subunits. This chain is Ribosome maturation factor RimP, found in Pseudomonas putida (strain ATCC 47054 / DSM 6125 / CFBP 8728 / NCIMB 11950 / KT2440).